The primary structure comprises 331 residues: Flagellar P-ring protein (331 aa).

Residues 1-25 form the signal peptide; it reads MKKRLAVLLVIVLTITFSFSVTTRI.

The protein belongs to the FlgI family. In terms of assembly, the basal body constitutes a major portion of the flagellar organelle and consists of four rings (L,P,S, and M) mounted on a central rod.

The protein localises to the periplasm. The protein resides in the bacterial flagellum basal body. Its function is as follows. Assembles around the rod to form the L-ring and probably protects the motor/basal body from shearing forces during rotation. The polypeptide is Flagellar P-ring protein (Thermotoga petrophila (strain ATCC BAA-488 / DSM 13995 / JCM 10881 / RKU-1)).